We begin with the raw amino-acid sequence, 138 residues long: ATP synthase epsilon chain, chloroplastic (138 aa).

This sequence belongs to the ATPase epsilon chain family. F-type ATPases have 2 components, CF(1) - the catalytic core - and CF(0) - the membrane proton channel. CF(1) has five subunits: alpha(3), beta(3), gamma(1), delta(1), epsilon(1). CF(0) has three main subunits: a, b and c.

Its subcellular location is the plastid. The protein localises to the chloroplast thylakoid membrane. Functionally, produces ATP from ADP in the presence of a proton gradient across the membrane. The chain is ATP synthase epsilon chain, chloroplastic from Anthoceros angustus (Hornwort).